A 217-amino-acid chain; its full sequence is Ribonuclease T (217 aa).

Residues 20 to 195 form the Exonuclease domain; it reads VVVDVETAGF…YDTEKTAELF (176 aa). Positions 23, 25, 182, and 187 each coordinate Mg(2+). Catalysis depends on His182, which acts as the Proton donor/acceptor.

This sequence belongs to the RNase T family. In terms of assembly, homodimer. Mg(2+) serves as cofactor.

Its function is as follows. Trims short 3' overhangs of a variety of RNA species, leaving a one or two nucleotide 3' overhang. Responsible for the end-turnover of tRNA: specifically removes the terminal AMP residue from uncharged tRNA (tRNA-C-C-A). Also appears to be involved in tRNA biosynthesis. The protein is Ribonuclease T of Vibrio vulnificus (strain CMCP6).